We begin with the raw amino-acid sequence, 784 residues long: Ribosome biogenesis protein BOP1 homolog (784 aa).

Positions 1–11 are enriched in basic residues; sequence MTKKLALKRRG. The disordered stretch occupies residues 1 to 159; that stretch reads MTKKLALKRR…DSDTSDEEDI (159 aa). 4 stretches are compositionally biased toward acidic residues: residues 27–36, 45–54, 62–73, and 84–111; these read SENEEEEEDL, EDSTDDEGID, SEELQFESDEEG, and AEEDEESSDEEDNEEEESTDGEEVEDEE. 2 stretches are compositionally biased toward basic and acidic residues: residues 112–123 and 138–148; these read KDSKSKQTDDKP and LPKRDSSKPEY. Over residues 149–158 the composition is skewed to acidic residues; that stretch reads QDSDTSDEED. WD repeat units lie at residues 445-486, 488-526, 570-612, 615-653, 656-695, 699-738, and 754-784; these read GHTD…RTIE, DEVVRCVAWCPNPKLSIIAVATGNRLLLVNPKVGDKVLV, THFK…SQIP, KSKGLIQFVLFHPVKPCFFVATQHNIRIYDLVKQELVKK, TNSKWISGMSIHPKGDNLLVSTYDKKMLWFDLDLSTKPYQ, LHRNAVRSVAFHLRYPLFASGSDDQAVIVSHGMVYNDLLQ, and RDEFGVLDVNWHPVQPWVFSTGADSTIRLYT.

The protein belongs to the WD repeat BOP1/ERB1 family.

It is found in the nucleus. The protein localises to the nucleolus. It localises to the nucleoplasm. In terms of biological role, required for maturation of ribosomal RNAs and formation of the large ribosomal subunit. In Drosophila melanogaster (Fruit fly), this protein is Ribosome biogenesis protein BOP1 homolog.